The primary structure comprises 103 residues: N(4)-acetylcytidine amidohydrolase (103 aa).

In terms of domain architecture, ASCH spans 6-100 (ITFFQRFQND…NQMQFYVIDF (95 aa)). K21 serves as the catalytic Proton acceptor. T24 serves as the catalytic Nucleophile. Residue E74 is the Proton donor of the active site.

It belongs to the N(4)-acetylcytidine amidohydrolase family.

The enzyme catalyses N(4)-acetylcytidine + H2O = cytidine + acetate + H(+). It catalyses the reaction N(4)-acetyl-2'-deoxycytidine + H2O = 2'-deoxycytidine + acetate + H(+). It carries out the reaction N(4)-acetylcytosine + H2O = cytosine + acetate + H(+). Catalyzes the hydrolysis of N(4)-acetylcytidine (ac4C). The polypeptide is N(4)-acetylcytidine amidohydrolase (yqfB) (Salmonella arizonae (strain ATCC BAA-731 / CDC346-86 / RSK2980)).